The primary structure comprises 535 residues: Cytochrome P450 monooxygenase atE (535 aa).

Cysteine 455 is a heme binding site.

This sequence belongs to the cytochrome P450 family. Requires heme as cofactor.

The catalysed reaction is 3-methylcatechol + AH2 + O2 = 3-methylbenzene-1,2,4-triol + A + H2O. It functions in the pathway secondary metabolite biosynthesis. Cytochrome P450 monooxygenase; part of the gene cluster that mediates the biosynthesis of terreic acid, a quinone epoxide inhibitor of Bruton's tyrosine kinase. The first step of the pathway is the synthesis of 6-methylsalicylic acid (6-MSA) by the 6-methylsalicylic acid synthase atX. In the biosynthesis of 6-MSA, atX utilizes one acetyl-CoA and three malonyl-CoAs as its substrates and catalyzes a series of programmed reactions including Claisen condensation, reduction, aldol cyclization, and the hydrolytic cleavage that yields 6-MSA. The 6-methylsalicylate 1-monooxygenase atA then catalyzes the decarboxylative hydroxylation of 6-MSA to 3-methylcatechol. The next step is the conversion of 3-methylcatechol to 3-methyl-1,2,4-benzenetriol by cytochrome P450 monooxygenase atE, which is enhanced by cytochrome P450 monooxygenase atG. Then, the epoxidase atD catalyzes the epoxidation and hydroxyl oxidation of 3-methyl-1,2,4-benzenetriol to terremutin. Lastly, GMC oxidoreductase atC oxidizes terremutin to terreic acid. The protein is Cytochrome P450 monooxygenase atE of Aspergillus terreus (strain NIH 2624 / FGSC A1156).